Reading from the N-terminus, the 154-residue chain is Transcriptional repressor NrdR (154 aa).

Residues 3 to 34 fold into a zinc finger; it reads CPFCNHGELKVIDSRNAPESNAIKRRRECLRC. Residues 48 to 138 enclose the ATP-cone domain; that stretch reads VQVLKRDGRY…VYRRFKDVGE (91 aa).

The protein belongs to the NrdR family. The cofactor is Zn(2+).

In terms of biological role, negatively regulates transcription of bacterial ribonucleotide reductase nrd genes and operons by binding to NrdR-boxes. This is Transcriptional repressor NrdR from Chlamydia trachomatis serovar L2 (strain ATCC VR-902B / DSM 19102 / 434/Bu).